Here is a 308-residue protein sequence, read N- to C-terminus: Ribosomal protein L11 methyltransferase (308 aa).

S-adenosyl-L-methionine-binding residues include Thr160, Gly181, Asp203, and Asn245.

This sequence belongs to the methyltransferase superfamily. PrmA family.

It is found in the cytoplasm. It carries out the reaction L-lysyl-[protein] + 3 S-adenosyl-L-methionine = N(6),N(6),N(6)-trimethyl-L-lysyl-[protein] + 3 S-adenosyl-L-homocysteine + 3 H(+). In terms of biological role, methylates ribosomal protein L11. The sequence is that of Ribosomal protein L11 methyltransferase from Thermoanaerobacter pseudethanolicus (strain ATCC 33223 / 39E) (Clostridium thermohydrosulfuricum).